The chain runs to 423 residues: Protein CLP1 homolog (423 aa).

Residues E16, K57, and 119 to 124 (DVGKST) each bind ATP.

Belongs to the Clp1 family. Clp1 subfamily.

The protein localises to the nucleus. Functionally, required for endonucleolytic cleavage during polyadenylation-dependent pre-mRNA 3'-end formation. The chain is Protein CLP1 homolog (cbc) from Drosophila simulans (Fruit fly).